Reading from the N-terminus, the 707-residue chain is E3 ubiquitin-protein ligase Praja-2 (707 aa).

Residues 1 to 10 (MSQYTEKEPS) show a composition bias toward basic and acidic residues. Disordered stretches follow at residues 1-32 (MSQYTEKEPSVMDQESSKAAWPKPAGGYQTIT), 72-120 (PKEN…PSIA), and 250-314 (QNGQ…VRPK). S2 is modified (N-acetylserine). Polar residues-rich tracts occupy residues 74-83 (ENTSGSSSLD) and 109-119 (LNQSTESSPSI). The span at 257–276 (RSSEDGVVRKRRQDDTDQGR) shows a compositional bias: basic and acidic residues. Positions 293-308 (EQNTSDRANHHGSSPE) are enriched in polar residues. Phosphoserine occurs at positions 306 and 320. S339 bears the Phosphoserine; by PKA mark. Disordered stretches follow at residues 379–405 (RVTQRETERNRVTSENGATASGRQESR) and 424–493 (EDSS…QTSL). Residues 381-390 (TQRETERNRV) show a composition bias toward basic and acidic residues. Phosphothreonine; by PKA is present on T385. A compositionally biased stretch (polar residues) spans 391–401 (TSENGATASGR). Phosphoserine is present on S430. Residues 465–481 (NDPELQSDSSGPEEENQ) show a composition bias toward acidic residues. The segment covering 482 to 491 (ELSLQEGEQT) has biased composition (polar residues). The interaction with PRKAR1A, PRKAR2A and PRKAR2B stretch occupies residues 530–707 (DGNNNLEDDS…PANDNAEEAP (178 aa)). A mediates interaction with TBC1D31 region spans residues 549–569 (WSLFDGFADGLGVAEAISYVD). The segment at 633 to 674 (CPICCSEYIKDDIATELPCHHFFHKPCVSIWLQKSGTCPVCR) adopts an RING-type; atypical zinc-finger fold. Positions 685-701 (SAAASSDPDPDASPAND) are enriched in low complexity. Positions 685-707 (SAAASSDPDPDASPANDNAEEAP) are disordered.

As to quaternary structure, binds ubiquitin-conjugating enzymes (E2s). In vitro, interacts with the ubiquitin-conjugating enzyme, UBE2D2. The phosphorylated form interacts with PRKAR1A, PRKAR2A and PRKAR2B. Binds the catalytic subunits of cAMP-dependent protein kinase. Interacts with MFHAS1. Interacts with TBC1D31; the interaction is direct and recruits PJA2 to centrosomes.

The protein resides in the cytoplasm. The protein localises to the cell membrane. It localises to the endoplasmic reticulum membrane. Its subcellular location is the golgi apparatus membrane. It is found in the synapse. The protein resides in the postsynaptic density. The protein localises to the cytoskeleton. It localises to the microtubule organizing center. Its subcellular location is the centrosome. It catalyses the reaction S-ubiquitinyl-[E2 ubiquitin-conjugating enzyme]-L-cysteine + [acceptor protein]-L-lysine = [E2 ubiquitin-conjugating enzyme]-L-cysteine + N(6)-ubiquitinyl-[acceptor protein]-L-lysine.. It functions in the pathway protein modification; protein ubiquitination. Has E2-dependent E3 ubiquitin-protein ligase activity. Responsible for ubiquitination of cAMP-dependent protein kinase type I and type II-alpha/beta regulatory subunits and for targeting them for proteasomal degradation. Essential for PKA-mediated long-term memory processes. Through the ubiquitination of MFHAS1, positively regulates the TLR2 signaling pathway that leads to the activation of the downstream p38 and JNK MAP kinases and promotes the polarization of macrophages toward the pro-inflammatory M1 phenotype. Plays a role in ciliogenesis by ubiquitinating OFD1. The protein is E3 ubiquitin-protein ligase Praja-2 (Pja2) of Mus musculus (Mouse).